We begin with the raw amino-acid sequence, 131 residues long: Large ribosomal subunit protein bL17 (131 aa).

It belongs to the bacterial ribosomal protein bL17 family. In terms of assembly, part of the 50S ribosomal subunit. Contacts protein L32.

This Burkholderia ambifaria (strain MC40-6) protein is Large ribosomal subunit protein bL17.